Consider the following 658-residue polypeptide: Integrator complex subunit 9 (658 aa).

1D-myo-inositol hexakisphosphate contacts are provided by K2 and F19. K58 participates in a covalent cross-link: Glycyl lysine isopeptide (Lys-Gly) (interchain with G-Cter in SUMO2). 1D-myo-inositol hexakisphosphate-binding residues include K510 and R511. Residues 548 to 574 (DNKHLLQPPPRPAQPTSGKKRKRVSDD) are disordered. The Nuclear localization signal signature appears at 566–570 (KKRKR).

The protein belongs to the metallo-beta-lactamase superfamily. RNA-metabolizing metallo-beta-lactamase-like family. INTS9 subfamily. Component of the Integrator complex, composed of core subunits INTS1, INTS2, INTS3, INTS4, INTS5, INTS6, INTS7, INTS8, INTS9/RC74, INTS10, INTS11/CPSF3L, INTS12, INTS13, INTS14 and INTS15. The core complex associates with protein phosphatase 2A subunits PPP2CA and PPP2R1A, to form the Integrator-PP2A (INTAC) complex. INTS9 is part of the RNA endonuclease subcomplex, composed of INTS4, INTS9, INTS11 and inositol hexakisphosphate (InsP6). Interacts with WDR73; interaction is required for the assembly of the RNA endonuclease subcomplex in the cytoplasm. Interacts with BRAT1; interaction is required for the assembly of the RNA endonuclease subcomplex. Interacts with ESRRB, ESRRB is not a core component of the Integrator complex and this association is a bridge for the interaction with the multiprotein complex Integrator; attracts the transcriptional machinery.

It is found in the nucleus. The protein resides in the cytoplasm. Component of the integrator complex, a multiprotein complex that terminates RNA polymerase II (Pol II) transcription in the promoter-proximal region of genes. The integrator complex provides a quality checkpoint during transcription elongation by driving premature transcription termination of transcripts that are unfavorably configured for transcriptional elongation: the complex terminates transcription by (1) catalyzing dephosphorylation of the C-terminal domain (CTD) of Pol II subunit POLR2A/RPB1 and SUPT5H/SPT5, (2) degrading the exiting nascent RNA transcript via endonuclease activity and (3) promoting the release of Pol II from bound DNA. The integrator complex is also involved in terminating the synthesis of non-coding Pol II transcripts, such as enhancer RNAs (eRNAs), small nuclear RNAs (snRNAs), telomerase RNAs and long non-coding RNAs (lncRNAs). Mediates recruitment of cytoplasmic dynein to the nuclear envelope, probably as component of the integrator complex. The sequence is that of Integrator complex subunit 9 from Homo sapiens (Human).